The primary structure comprises 352 residues: Glutamine synthetase cytosolic isozyme (352 aa).

In terms of domain architecture, GS beta-grasp spans 19-98 (FIAEYIWIDA…VMCDTYTPAG (80 aa)). The GS catalytic domain maps to 105–352 (KRCNAAKIFS…TSMIAETTIL (248 aa)).

The protein belongs to the glutamine synthetase family. Homooctamer.

Its subcellular location is the cytoplasm. It carries out the reaction L-glutamate + NH4(+) + ATP = L-glutamine + ADP + phosphate + H(+). The sequence is that of Glutamine synthetase cytosolic isozyme (GLN1) from Daucus carota (Wild carrot).